The sequence spans 67 residues: DNA-directed RNA polymerase subunit omega (67 aa).

The protein belongs to the RNA polymerase subunit omega family. The RNAP catalytic core consists of 2 alpha, 1 beta, 1 beta' and 1 omega subunit. When a sigma factor is associated with the core the holoenzyme is formed, which can initiate transcription.

The enzyme catalyses RNA(n) + a ribonucleoside 5'-triphosphate = RNA(n+1) + diphosphate. Its function is as follows. Promotes RNA polymerase assembly. Latches the N- and C-terminal regions of the beta' subunit thereby facilitating its interaction with the beta and alpha subunits. This chain is DNA-directed RNA polymerase subunit omega, found in Bordetella pertussis (strain Tohama I / ATCC BAA-589 / NCTC 13251).